An 82-amino-acid polypeptide reads, in one-letter code: UPF0180 protein BH2667 (82 aa).

The protein belongs to the UPF0180 family.

This Halalkalibacterium halodurans (strain ATCC BAA-125 / DSM 18197 / FERM 7344 / JCM 9153 / C-125) (Bacillus halodurans) protein is UPF0180 protein BH2667.